A 590-amino-acid polypeptide reads, in one-letter code: Suprabasin (590 aa).

Residues 1 to 25 (MHLARLVGSCSLLLLLGALSGWAAS) form the signal peptide. Disordered stretches follow at residues 182–213 (GNEA…AHHG), 242–266 (FGQG…GVHH), 297–338 (GQGA…GVHH), and 545–570 (LNGN…SGAS). 4 stretches are compositionally biased toward low complexity: residues 190–200 (QGVHHAAGQAG), 243–254 (GQGAHHAAGQAG), 297–330 (GQGA…NEAG), and 546–559 (NGNH…HQGG). Polar residues predominate over residues 560–570 (ATTTPLASGAS).

Detected in thymus, uterus and esophagus.

The protein localises to the secreted. This Homo sapiens (Human) protein is Suprabasin (SBSN).